Here is a 110-residue protein sequence, read N- to C-terminus: UPF0122 protein SAR1212 (110 aa).

Belongs to the UPF0122 family.

In terms of biological role, might take part in the signal recognition particle (SRP) pathway. This is inferred from the conservation of its genetic proximity to ftsY/ffh. May be a regulatory protein. The protein is UPF0122 protein SAR1212 of Staphylococcus aureus (strain MRSA252).